The chain runs to 149 residues: Transcriptional repressor NrdR (149 aa).

A zinc finger lies at 3 to 34 (CPFCFAVDTKVIDSRLVGEGSSVRRRRQCLVC). In terms of domain architecture, ATP-cone spans 49 to 139 (PRVVKSNDVR…VYRSFEDIKE (91 aa)).

This sequence belongs to the NrdR family. The cofactor is Zn(2+).

In terms of biological role, negatively regulates transcription of bacterial ribonucleotide reductase nrd genes and operons by binding to NrdR-boxes. The chain is Transcriptional repressor NrdR from Klebsiella pneumoniae (strain 342).